The primary structure comprises 269 residues: uncharacterized protein (269 aa).

5 helical membrane passes run 65 to 85 (FSLF…LFVM), 156 to 176 (VTSV…ISMV), 182 to 202 (YTRI…WLGF), 206 to 226 (MMSF…NDFW), and 242 to 262 (TLSA…EFSF). Residues 266 to 269 (KKKW) carry the Di-lysine motif motif.

It belongs to the SURF4 family.

It is found in the membrane. This is an uncharacterized protein from Caenorhabditis elegans.